A 698-amino-acid polypeptide reads, in one-letter code: Elongation factor G (698 aa).

One can recognise a tr-type G domain in the interval 10-285 (AATRNIGIMA…AVVDFLPSPT (276 aa)). GTP-binding positions include 19-26 (AHIDAGKT), 83-87 (DTPGH), and 137-140 (NKMD).

It belongs to the TRAFAC class translation factor GTPase superfamily. Classic translation factor GTPase family. EF-G/EF-2 subfamily.

The protein resides in the cytoplasm. Functionally, catalyzes the GTP-dependent ribosomal translocation step during translation elongation. During this step, the ribosome changes from the pre-translocational (PRE) to the post-translocational (POST) state as the newly formed A-site-bound peptidyl-tRNA and P-site-bound deacylated tRNA move to the P and E sites, respectively. Catalyzes the coordinated movement of the two tRNA molecules, the mRNA and conformational changes in the ribosome. This chain is Elongation factor G, found in Parafrankia sp. (strain EAN1pec).